Reading from the N-terminus, the 242-residue chain is Caffeoyl-CoA O-methyltransferase 2 (242 aa).

Position 16 (K16) interacts with substrate. S-adenosyl-L-methionine is bound by residues T58, E80, G82–V83, S88, D106, and A135. A substrate-binding site is contributed by D158. D158 provides a ligand contact to a divalent metal cation. Residue D160 coordinates S-adenosyl-L-methionine. A divalent metal cation-binding residues include D184 and N185. Residue N189 participates in substrate binding.

The protein belongs to the class I-like SAM-binding methyltransferase superfamily. Cation-dependent O-methyltransferase family. CCoAMT subfamily. It depends on a divalent metal cation as a cofactor. As to expression, mostly expressed in petal limbs and tubes, and, at low levels, in stems, roots and leaves.

It is found in the cytoplasm. The protein resides in the cytosol. The catalysed reaction is (E)-caffeoyl-CoA + S-adenosyl-L-methionine = (E)-feruloyl-CoA + S-adenosyl-L-homocysteine + H(+). The enzyme catalyses (E)-5-hydroxyferuloyl-CoA + S-adenosyl-L-methionine = (E)-sinapoyl-CoA + S-adenosyl-L-homocysteine + H(+). The protein operates within aromatic compound metabolism; phenylpropanoid biosynthesis. Functionally, involved in the production of floral volatile phenylpropanoids in flowers of fragrant cultivars (e.g. cv. Mitchell and cv. V26) from cinnamic acid, a common precursor with the anthocyanin biosynthesis pathway involved in flower pigmentation. Methylates caffeoyl-CoA to feruloyl-CoA, also able to methylate 5-hydroxyferuloyl-CoA. The protein is Caffeoyl-CoA O-methyltransferase 2 of Petunia hybrida (Petunia).